Here is a 140-residue protein sequence, read N- to C-terminus: Large ribosomal subunit protein uL11 (140 aa).

The protein belongs to the universal ribosomal protein uL11 family. As to quaternary structure, part of the ribosomal stalk of the 50S ribosomal subunit. Interacts with L10 and the large rRNA to form the base of the stalk. L10 forms an elongated spine to which L12 dimers bind in a sequential fashion forming a multimeric L10(L12)X complex. In terms of processing, one or more lysine residues are methylated.

Its function is as follows. Forms part of the ribosomal stalk which helps the ribosome interact with GTP-bound translation factors. The protein is Large ribosomal subunit protein uL11 of Oleidesulfovibrio alaskensis (strain ATCC BAA-1058 / DSM 17464 / G20) (Desulfovibrio alaskensis).